The sequence spans 91 residues: MPRPTGKKFDKRRQQQNPLFKRKKFCRFTAAGVEQIDYKDTETLKDFIGENGKITPARLTGTKAHYQRQLDTAIKRARFLALLPYTDQHKA.

The protein belongs to the bacterial ribosomal protein bS18 family. Part of the 30S ribosomal subunit. Forms a tight heterodimer with protein bS6.

Functionally, binds as a heterodimer with protein bS6 to the central domain of the 16S rRNA, where it helps stabilize the platform of the 30S subunit. This chain is Small ribosomal subunit protein bS18, found in Burkholderia lata (strain ATCC 17760 / DSM 23089 / LMG 22485 / NCIMB 9086 / R18194 / 383).